The sequence spans 337 residues: Beta-glucosidase-like protein NCA3, mitochondrial (337 aa).

Residues 57-67 show a composition bias toward low complexity; sequence ESAATTTTLSS. The tract at residues 57-84 is disordered; it reads ESAATTTTLSSSEKDTSEQKRDGGFQDG. Positions 68-80 are enriched in basic and acidic residues; sequence SEKDTSEQKRDGG.

Belongs to the SUN family.

The protein localises to the mitochondrion. Involved in the mitochondrial expression of subunits 6 and 8 of the F0-F1 ATP synthase. The protein is Beta-glucosidase-like protein NCA3, mitochondrial (NCA3) of Saccharomyces cerevisiae (strain ATCC 204508 / S288c) (Baker's yeast).